The primary structure comprises 161 residues: F-box only protein 48 (161 aa).

The segment at 1-25 (MKKTSKKNNNFKIPGTELNSADAER) is disordered. The F-box domain occupies 32–79 (RNFVELLPLEVTYKIFSQLDIQSLCRASRTCTGWNCAIRNNDSLWKPH).

In Mus musculus (Mouse), this protein is F-box only protein 48 (Fbxo48).